Here is a 59-residue protein sequence, read N- to C-terminus: Venom protein 27.7 (59 aa).

The first 29 residues, 1–29 (MTFITLTIGLSLRTIFLIFIFLPPPHLLA), serve as a signal peptide directing secretion.

This sequence belongs to the non-disulfide-bridged peptide (NDBP) superfamily. As to expression, expressed by the venom gland.

It is found in the secreted. This chain is Venom protein 27.7, found in Lychas mucronatus (Chinese swimming scorpion).